The chain runs to 361 residues: G kinase-anchoring protein 1-A (361 aa).

Disordered regions lie at residues 22 to 111 (DSSS…EDWQ) and 140 to 183 (FEES…KDFQ). The span at 35–48 (AHSSGKAHSGSAAR) shows a compositional bias: low complexity. A coiled-coil region spans residues 51-79 (NKGNEKKKEKRRKKKEQQQSEANELRNLA). Residues 158-168 (KVNKKDKRKNN) are compositionally biased toward basic residues. Coiled-coil stretches lie at residues 246 to 296 (KDGR…QEGE) and 326 to 346 (AALE…VKYQ).

Belongs to the GKAP1 family.

It is found in the golgi apparatus. Functionally, may play a role in the regulation of insulin-dependent IRS1 tyrosine phosphorylation in adipocytes. This chain is G kinase-anchoring protein 1-A (gkap1-a), found in Xenopus laevis (African clawed frog).